The primary structure comprises 140 residues: Profilin-2 (140 aa).

Position 2 is an N-acetylalanine (Ala-2).

This sequence belongs to the profilin family. In terms of assembly, occurs in many kinds of cells as a complex with monomeric actin in a 1:1 ratio. Interacts with PFN2. Interacts with ACTMAP (via N-terminus); the interaction may facilitate efficient cleavage of the acetylated N-terminus of immature actin by ACTMAP.

The protein resides in the cytoplasm. The protein localises to the cytoskeleton. Binds to actin and affects the structure of the cytoskeleton. At high concentrations, profilin prevents the polymerization of actin, whereas it enhances it at low concentrations. By binding to PIP2, it inhibits the formation of IP3 and DG. The protein is Profilin-2 (Pfn2) of Rattus norvegicus (Rat).